The chain runs to 425 residues: 2-oxoglutarate and iron-dependent oxygenase JMJD4 (425 aa).

A JmjC domain is found at 141-300 (SRAFPEQDVY…IMWCFLQDEL (160 aa)). Residues H188, D190, and H268 each contribute to the Fe cation site.

It belongs to the JMJD6 family. Fe(2+) serves as cofactor.

It localises to the cytoplasm. It catalyses the reaction L-lysyl-[protein] + 2-oxoglutarate + O2 = 4-hydroxy-L-lysyl-[protein] + succinate + CO2. Catalyzes the 2-oxoglutarate and iron-dependent C4-lysyl hydroxylation of ETF1 at 'Lys-63' thereby promoting the translational termination efficiency of ETF1. This is 2-oxoglutarate and iron-dependent oxygenase JMJD4 (JMJD4) from Gallus gallus (Chicken).